Consider the following 357-residue polypeptide: Aminomethyltransferase (357 aa).

It belongs to the GcvT family. As to quaternary structure, the glycine cleavage system is composed of four proteins: P, T, L and H.

It catalyses the reaction N(6)-[(R)-S(8)-aminomethyldihydrolipoyl]-L-lysyl-[protein] + (6S)-5,6,7,8-tetrahydrofolate = N(6)-[(R)-dihydrolipoyl]-L-lysyl-[protein] + (6R)-5,10-methylene-5,6,7,8-tetrahydrofolate + NH4(+). Its function is as follows. The glycine cleavage system catalyzes the degradation of glycine. The protein is Aminomethyltransferase of Halothermothrix orenii (strain H 168 / OCM 544 / DSM 9562).